A 400-amino-acid chain; its full sequence is Subtilisin-like protease 7 (400 aa).

The first 20 residues, 1-20 (MGFITKAIPLALAAASVING), serve as a signal peptide directing secretion. Positions 21-119 (AEILETRAGV…IERDARVQIN (99 aa)) are excised as a propeptide. Residues 36-118 (KYIVVMNDGM…YIERDARVQI (83 aa)) form the Inhibitor I9 domain. In terms of domain architecture, Peptidase S8 spans 129 to 400 (SWGLARVGSK…GKLINNGSGK (272 aa)). Active-site charge relay system residues include Asp161 and His192. N-linked (GlcNAc...) asparagine glycosylation is present at Asn252. Ser346 acts as the Charge relay system in catalysis. Asn396 carries N-linked (GlcNAc...) asparagine glycosylation.

This sequence belongs to the peptidase S8 family.

It localises to the secreted. Functionally, secreted subtilisin-like serine protease with keratinolytic activity that contributes to pathogenicity. The polypeptide is Subtilisin-like protease 7 (SUB7) (Arthroderma gypseum (strain ATCC MYA-4604 / CBS 118893) (Microsporum gypseum)).